A 141-amino-acid polypeptide reads, in one-letter code: Large ribosomal subunit protein uL11 (141 aa).

It belongs to the universal ribosomal protein uL11 family. In terms of assembly, part of the ribosomal stalk of the 50S ribosomal subunit. Interacts with L10 and the large rRNA to form the base of the stalk. L10 forms an elongated spine to which L12 dimers bind in a sequential fashion forming a multimeric L10(L12)X complex. Post-translationally, one or more lysine residues are methylated.

Functionally, forms part of the ribosomal stalk which helps the ribosome interact with GTP-bound translation factors. The sequence is that of Large ribosomal subunit protein uL11 from Roseobacter denitrificans (strain ATCC 33942 / OCh 114) (Erythrobacter sp. (strain OCh 114)).